Here is a 399-residue protein sequence, read N- to C-terminus: PCI domain-containing protein 2 (399 aa).

The PCI domain maps to 210–391 (VTFKYYVGRK…QKLVVSKQNP (182 aa)).

It belongs to the CSN12 family.

The sequence is that of PCI domain-containing protein 2 (pcid2) from Xenopus laevis (African clawed frog).